We begin with the raw amino-acid sequence, 157 residues long: Vitamin K-dependent protein C (157 aa).

In terms of domain architecture, Peptidase S1 spans E1–V157. N17 is a glycosylation site (N-linked (GlcNAc...) asparagine). D26 serves as the catalytic Charge relay system. N78 carries N-linked (GlcNAc...) asparagine glycosylation. Intrachain disulfides connect C96–C110 and C121–C149. The Charge relay system role is filled by S125.

Belongs to the peptidase S1 family. As to expression, plasma; synthesized in the liver.

The protein resides in the secreted. It is found in the golgi apparatus. The protein localises to the endoplasmic reticulum. The enzyme catalyses Degradation of blood coagulation factors Va and VIIIa.. In terms of biological role, protein C is a vitamin K-dependent serine protease that regulates blood coagulation by inactivating factors Va and VIIIa in the presence of calcium ions and phospholipids. Exerts a protective effect on the endothelial cell barrier function. The sequence is that of Vitamin K-dependent protein C (PROC) from Equus caballus (Horse).